Here is a 160-residue protein sequence, read N- to C-terminus: S-ribosylhomocysteine lyase (160 aa).

Residues H57, H61, and C127 each contribute to the Fe cation site.

It belongs to the LuxS family. As to quaternary structure, homodimer. Fe cation is required as a cofactor.

The catalysed reaction is S-(5-deoxy-D-ribos-5-yl)-L-homocysteine = (S)-4,5-dihydroxypentane-2,3-dione + L-homocysteine. In terms of biological role, involved in the synthesis of autoinducer 2 (AI-2) which is secreted by bacteria and is used to communicate both the cell density and the metabolic potential of the environment. The regulation of gene expression in response to changes in cell density is called quorum sensing. Catalyzes the transformation of S-ribosylhomocysteine (RHC) to homocysteine (HC) and 4,5-dihydroxy-2,3-pentadione (DPD). This Streptococcus suis (strain 98HAH33) protein is S-ribosylhomocysteine lyase.